The primary structure comprises 855 residues: Suppressor of tumorigenicity 14 protein homolog (855 aa).

The disordered stretch occupies residues 1–21; the sequence is MKSERARRGAGGSGDLGAGFK. Residues 1–55 are Cytoplasmic-facing; sequence MKSERARRGAGGSGDLGAGFKYTSRPENMNGCEEGVEFLPANNSSKVEKGGPRRW. Serine 13 is modified (phosphoserine). Residues 56–76 traverse the membrane as a helical; Signal-anchor for type II membrane protein segment; the sequence is VVLMAVLAAFLALSLLAGLLA. Residues 77-855 lie on the Extracellular side of the membrane; that stretch reads WHFQDRNVRV…RDWIKAQIGV (779 aa). One can recognise an SEA domain in the interval 86 to 203; that stretch reads VQKIFNGYLS…TSVVAFPSDP (118 aa). N-linked (GlcNAc...) asparagine glycosylation occurs at asparagine 109. The cysteines at positions 214 and 244 are disulfide-linked. CUB domains are found at residues 214-334 and 340-447; these read CSFA…FFQL and CGGY…FLSF. Asparagine 302 and asparagine 365 each carry an N-linked (GlcNAc...) asparagine glycan. Intrachain disulfides connect cysteine 340–cysteine 366, cysteine 397–cysteine 410, cysteine 453–cysteine 464, cysteine 459–cysteine 477, cysteine 471–cysteine 486, cysteine 488–cysteine 501, cysteine 496–cysteine 514, cysteine 508–cysteine 523, cysteine 525–cysteine 537, cysteine 532–cysteine 550, cysteine 544–cysteine 559, cysteine 567–cysteine 579, cysteine 574–cysteine 593, cysteine 587–cysteine 602, and cysteine 641–cysteine 657. 4 LDL-receptor class A domains span residues 452–487, 487–524, 524–560, and 566–603; these read PCPG…LDCK, KCNA…EGCS, SCPP…AKCQ, and PCTE…KDCD. Residue asparagine 489 is glycosylated (N-linked (GlcNAc...) asparagine). A Peptidase S1 domain is found at 615–854; the sequence is VVGGENSDQG…FRDWIKAQIG (240 aa). Catalysis depends on charge relay system residues histidine 656 and aspartate 711. Asparagine 772 carries N-linked (GlcNAc...) asparagine glycosylation. Disulfide bonds link cysteine 776/cysteine 790 and cysteine 801/cysteine 830. Serine 805 functions as the Charge relay system in the catalytic mechanism.

This sequence belongs to the peptidase S1 family. Interacts with CDCP1. May interact with TMEFF1.

It is found in the membrane. It carries out the reaction Cleaves various synthetic substrates with Arg or Lys at the P1 position and prefers small side-chain amino acids, such as Ala and Gly, at the P2 position.. Exhibits trypsin-like activity as defined by cleavage of synthetic substrates with Arg or Lys as the P1 site. Involved in the terminal differentiation of keratinocytes through prostasin (PRSS8) activation and filaggrin (FLG) processing. Proteolytically cleaves and therefore activates TMPRSS13. This is Suppressor of tumorigenicity 14 protein homolog (ST14) from Bos taurus (Bovine).